We begin with the raw amino-acid sequence, 207 residues long: Granulocyte colony-stimulating factor (207 aa).

The signal sequence occupies residues 1-30 (MAGPATQSPMKLMALQLLLWHSALWTVQEA). Cystine bridges form between Cys-69/Cys-75 and Cys-97/Cys-107. The O-linked (GalNAc...) threonine glycan is linked to Thr-166.

This sequence belongs to the IL-6 superfamily. Monomer. Post-translationally, O-glycan consists of Gal-GalNAc disaccharide which can be modified with up to two sialic acid residues (done in recombinantly expressed G-CSF from CHO cells).

It localises to the secreted. Granulocyte/macrophage colony-stimulating factors are cytokines that act in hematopoiesis by controlling the production, differentiation, and function of 2 related white cell populations of the blood, the granulocytes and the monocytes-macrophages. This CSF induces granulocytes. In Homo sapiens (Human), this protein is Granulocyte colony-stimulating factor (CSF3).